We begin with the raw amino-acid sequence, 155 residues long: Myosin light chain alkali (155 aa).

2 consecutive EF-hand domains span residues 7–41 and 80–115; these read REIENVEFVFEVMGSAGEGIDAVDLGDALRALNLN and GCYEDFIECLKLYDKEENGTMMLAELQHALLALGES.

Myosin is a hexamer of 2 heavy chains and 4 light chains.

In Drosophila pseudoobscura pseudoobscura (Fruit fly), this protein is Myosin light chain alkali (Mlc1).